The following is a 293-amino-acid chain: Ribosomal protein L11 methyltransferase (293 aa).

4 residues coordinate S-adenosyl-L-methionine: Thr-145, Gly-166, Asp-188, and Asn-230.

It belongs to the methyltransferase superfamily. PrmA family.

Its subcellular location is the cytoplasm. The catalysed reaction is L-lysyl-[protein] + 3 S-adenosyl-L-methionine = N(6),N(6),N(6)-trimethyl-L-lysyl-[protein] + 3 S-adenosyl-L-homocysteine + 3 H(+). Its function is as follows. Methylates ribosomal protein L11. The polypeptide is Ribosomal protein L11 methyltransferase (Actinobacillus pleuropneumoniae serotype 5b (strain L20)).